A 170-amino-acid polypeptide reads, in one-letter code: MAADDHFSLFGLPARFALDPVQLEQAWRAVAARVHPDRYATASAAERRVAMQWAARANEAYRQLRDPMLRARYLCEQAGVDLQTESNTAMDPAFLMQQMEWREMLDDARRDPAAFAALRAELEQARLRMQQTLSELIDERGDYQQAGTKVREWMFVEKLAQELSAAQPMQ.

The region spanning 5-79 (DHFSLFGLPA…RARYLCEQAG (75 aa)) is the J domain.

The protein belongs to the HscB family. Interacts with HscA and stimulates its ATPase activity.

Co-chaperone involved in the maturation of iron-sulfur cluster-containing proteins. Seems to help targeting proteins to be folded toward HscA. The polypeptide is Co-chaperone protein HscB homolog (Bordetella parapertussis (strain 12822 / ATCC BAA-587 / NCTC 13253)).